We begin with the raw amino-acid sequence, 361 residues long: MEKKMFNSLMKIHQKYQDLKQLLETDQILNDQKQYLQIAKEIASITEIIEVFQKFLDDQKVLEDAKTILIQEDDPELIQLAKVEIATMSKNIEEYEKKLLILMLPKDKNDEKDVIVEIRGAAGGDEANIFVGDLFKMYHKWADSQKAKVKVLSSSLALAGGFSQIIFQISGQKIYSKLKFESGVHRVQRVPATETMGRIHTSTATVTVMPKIDEKIEIEINPSDLKIDTYRSSGAGGQSVNTTDSAVRITHIPTGIVVTSQDERSQIGNKEIAMGILKSKIYNLELQKQQQKQSDFRKLAGSGARSEKIRTYNYPQDRLTDHRINFSTSLKPIIQGNLNPIIEALLAQEKTELILQNYANK.

Gln-238 is modified (N5-methylglutamine).

Belongs to the prokaryotic/mitochondrial release factor family. In terms of processing, methylated by PrmC. Methylation increases the termination efficiency of RF1.

Its subcellular location is the cytoplasm. Functionally, peptide chain release factor 1 directs the termination of translation in response to the peptide chain termination codons UAG and UAA. The protein is Peptide chain release factor 1 of Mesomycoplasma hyopneumoniae (strain 232) (Mycoplasma hyopneumoniae).